Here is a 262-residue protein sequence, read N- to C-terminus: Acyl-[acyl-carrier-protein]--UDP-N-acetylglucosamine O-acyltransferase (262 aa).

The protein belongs to the transferase hexapeptide repeat family. LpxA subfamily. Homotrimer.

It is found in the cytoplasm. It catalyses the reaction a (3R)-hydroxyacyl-[ACP] + UDP-N-acetyl-alpha-D-glucosamine = a UDP-3-O-[(3R)-3-hydroxyacyl]-N-acetyl-alpha-D-glucosamine + holo-[ACP]. It participates in glycolipid biosynthesis; lipid IV(A) biosynthesis; lipid IV(A) from (3R)-3-hydroxytetradecanoyl-[acyl-carrier-protein] and UDP-N-acetyl-alpha-D-glucosamine: step 1/6. In terms of biological role, involved in the biosynthesis of lipid A, a phosphorylated glycolipid that anchors the lipopolysaccharide to the outer membrane of the cell. The polypeptide is Acyl-[acyl-carrier-protein]--UDP-N-acetylglucosamine O-acyltransferase (Pasteurella multocida (strain Pm70)).